The primary structure comprises 498 residues: ATP synthase subunit beta, chloroplastic (498 aa).

An ATP-binding site is contributed by 172–179; it reads GGAGVGKT.

The protein belongs to the ATPase alpha/beta chains family. In terms of assembly, F-type ATPases have 2 components, CF(1) - the catalytic core - and CF(0) - the membrane proton channel. CF(1) has five subunits: alpha(3), beta(3), gamma(1), delta(1), epsilon(1). CF(0) has four main subunits: a(1), b(1), b'(1) and c(9-12).

The protein resides in the plastid. It is found in the chloroplast thylakoid membrane. It catalyses the reaction ATP + H2O + 4 H(+)(in) = ADP + phosphate + 5 H(+)(out). Functionally, produces ATP from ADP in the presence of a proton gradient across the membrane. The catalytic sites are hosted primarily by the beta subunits. In Phormium tenax (New Zealand flax), this protein is ATP synthase subunit beta, chloroplastic.